A 77-amino-acid polypeptide reads, in one-letter code: U8-lycotoxin-Ls1a (77 aa).

An N-terminal signal peptide occupies residues 1–20; that stretch reads MKLIIFTGLVLFAIVSLIEA. A propeptide spanning residues 21–26 is cleaved from the precursor; it reads QAENEK.

The protein belongs to the neurotoxin 19 (CSTX) family. 08 (U8-Lctx) subfamily. Contains 4 disulfide bonds. In terms of tissue distribution, expressed by the venom gland.

The protein localises to the secreted. This is U8-lycotoxin-Ls1a from Lycosa singoriensis (Wolf spider).